A 176-amino-acid polypeptide reads, in one-letter code: Ribosome maturation factor RimM (176 aa).

In terms of domain architecture, PRC barrel spans 93-172 (KDEFFYFDII…KIQVKNSLDI (80 aa)).

This sequence belongs to the RimM family. As to quaternary structure, binds ribosomal protein uS19.

The protein resides in the cytoplasm. In terms of biological role, an accessory protein needed during the final step in the assembly of 30S ribosomal subunit, possibly for assembly of the head region. Essential for efficient processing of 16S rRNA. May be needed both before and after RbfA during the maturation of 16S rRNA. It has affinity for free ribosomal 30S subunits but not for 70S ribosomes. This chain is Ribosome maturation factor RimM, found in Campylobacter fetus subsp. fetus (strain 82-40).